A 232-amino-acid chain; its full sequence is Octanoyltransferase (232 aa).

Residues aspartate 32–cysteine 219 form the BPL/LPL catalytic domain. Substrate contacts are provided by residues arginine 77–histidine 84, alanine 140–glycine 142, and glycine 153–alanine 155. Cysteine 171 acts as the Acyl-thioester intermediate in catalysis.

This sequence belongs to the LipB family.

Its subcellular location is the cytoplasm. It catalyses the reaction octanoyl-[ACP] + L-lysyl-[protein] = N(6)-octanoyl-L-lysyl-[protein] + holo-[ACP] + H(+). Its pathway is protein modification; protein lipoylation via endogenous pathway; protein N(6)-(lipoyl)lysine from octanoyl-[acyl-carrier-protein]: step 1/2. Catalyzes the transfer of endogenously produced octanoic acid from octanoyl-acyl-carrier-protein onto the lipoyl domains of lipoate-dependent enzymes. Lipoyl-ACP can also act as a substrate although octanoyl-ACP is likely to be the physiological substrate. The polypeptide is Octanoyltransferase (Dictyoglomus thermophilum (strain ATCC 35947 / DSM 3960 / H-6-12)).